The following is a 500-amino-acid chain: MSFVLAIDQGTTSSRAIVFRSDISIAARAQAEFPQHFPASGWVEHEPEDIWTSTVMVCRDAIAQAGISAKDIAAIGITNQRETTVVWDRATGQAVHRAIVWQDRRTADICAKLKADGREPVISEKTGLIIDPYFSGTKVAWILDHVPGARARAARGELMFGTVDCYLLWRLTGGKVHATDATNASRTLLFNIHTGQWDDELLEIIGVPRSMLPEVKDSSARFGESVPDLFGGAIAISGIAGDQQAATIGQACFRPGMMKSTYGTGCFALLNTGTTPVVSKNKLLTTVAYQLDGKRTYALEGSIFVAGSAVQWLRDGLGIIKHAAETGPLADQSDSMQSVYLVPAFVGMGAPYWNPRVRGALFGLTRNTGPAELAHAALESVCYQTFDLWAAMRADWPSSETASVVLRVDGGMTASDWTMQRLADLLDAPVDRPVIQETTALGAAYLAGLNAGVYPEPTKFADNWRLEHRFKPNMSEATRERKLAGWARAVKGVLASDEGA.

Thr-11 serves as a coordination point for ADP. 3 residues coordinate ATP: Thr-11, Thr-12, and Ser-13. Residue Thr-11 coordinates sn-glycerol 3-phosphate. Arg-15 lines the ADP pocket. Arg-81, Glu-82, Tyr-133, and Asp-242 together coordinate sn-glycerol 3-phosphate. Residues Arg-81, Glu-82, Tyr-133, Asp-242, and Gln-243 each coordinate glycerol. The ADP site is built by Thr-264 and Gly-307. ATP is bound by residues Thr-264, Gly-307, Gln-311, and Gly-411. Residue Gly-411 coordinates ADP.

The protein belongs to the FGGY kinase family.

It catalyses the reaction glycerol + ATP = sn-glycerol 3-phosphate + ADP + H(+). The protein operates within polyol metabolism; glycerol degradation via glycerol kinase pathway; sn-glycerol 3-phosphate from glycerol: step 1/1. With respect to regulation, inhibited by fructose 1,6-bisphosphate (FBP). Its function is as follows. Key enzyme in the regulation of glycerol uptake and metabolism. Catalyzes the phosphorylation of glycerol to yield sn-glycerol 3-phosphate. The polypeptide is Glycerol kinase (Bradyrhizobium diazoefficiens (strain JCM 10833 / BCRC 13528 / IAM 13628 / NBRC 14792 / USDA 110)).